The chain runs to 130 residues: MSRQNTIADAMSALKNAGDCGKPECILEPSSKLLGAMLRIMQDAGYIGSFDMIDDGRGGQFRVHLSGRINKCGAITPRYSVGLDELEYWETRYLPGKNFGLLILSTSRGVLTHNQARQNGIGGELLGFVY.

It belongs to the universal ribosomal protein uS8 family. As to quaternary structure, part of the 30S ribosomal subunit.

In terms of biological role, one of the primary rRNA binding proteins, it binds directly to 16S rRNA central domain where it helps coordinate assembly of the platform of the 30S subunit. This is Small ribosomal subunit protein uS8 from Methanosphaerula palustris (strain ATCC BAA-1556 / DSM 19958 / E1-9c).